Reading from the N-terminus, the 263-residue chain is Triosephosphate isomerase (263 aa).

Substrate is bound at residue 10-12 (NWK). The active-site Electrophile is His-104. Glu-176 (proton acceptor) is an active-site residue. Substrate contacts are provided by residues Gly-182, Ser-221, and 242-243 (GG).

This sequence belongs to the triosephosphate isomerase family. Homodimer.

The protein localises to the cytoplasm. The enzyme catalyses D-glyceraldehyde 3-phosphate = dihydroxyacetone phosphate. It participates in carbohydrate biosynthesis; gluconeogenesis. It functions in the pathway carbohydrate degradation; glycolysis; D-glyceraldehyde 3-phosphate from glycerone phosphate: step 1/1. In terms of biological role, involved in the gluconeogenesis. Catalyzes stereospecifically the conversion of dihydroxyacetone phosphate (DHAP) to D-glyceraldehyde-3-phosphate (G3P). This is Triosephosphate isomerase from Haemophilus influenzae (strain 86-028NP).